The chain runs to 129 residues: uncharacterized protein (129 aa).

Transmembrane regions (helical) follow at residues 4-24 (FKFL…ILII) and 37-57 (VISL…DLSI).

To B.burgdorferi BBF20.

It is found in the cell membrane. This is an uncharacterized protein from Borreliella burgdorferi (strain ATCC 35210 / DSM 4680 / CIP 102532 / B31) (Borrelia burgdorferi).